The chain runs to 276 residues: Type II pantothenate kinase (276 aa).

8–15 lines the ATP pocket; that stretch reads DAGGTLTK. Residue Glu-76 is the Proton acceptor of the active site. ATP-binding positions include Thr-105, 127–131, Phe-143, and Ser-230; that span reads GGTIM.

This sequence belongs to the type II pantothenate kinase family. As to quaternary structure, homodimer.

It localises to the cytoplasm. The enzyme catalyses (R)-pantothenate + ATP = (R)-4'-phosphopantothenate + ADP + H(+). It functions in the pathway cofactor biosynthesis; coenzyme A biosynthesis; CoA from (R)-pantothenate: step 1/5. Its function is as follows. Catalyzes the phosphorylation of pantothenate (Pan), the first step in CoA biosynthesis. In Bacillus anthracis, this protein is Type II pantothenate kinase.